A 215-amino-acid polypeptide reads, in one-letter code: Transcription elongation factor A protein-like 4 (215 aa).

Met1 is modified (N-acetylmethionine). The tract at residues 1–133 is disordered; that stretch reads MEKLYSENEG…RKAKRKTNKG (133 aa). A phosphoserine mark is found at Ser6, Ser88, and Ser102. Residues 25–102 show a composition bias toward basic and acidic residues; sequence QDERKPEVTC…KPEIEGKPES (78 aa).

Belongs to the TFS-II family. TFA subfamily.

The protein resides in the nucleus. Its function is as follows. May be involved in transcriptional regulation. The protein is Transcription elongation factor A protein-like 4 (TCEAL4) of Homo sapiens (Human).